We begin with the raw amino-acid sequence, 156 residues long: MDKKVTEVVEAFAQPIVEELNLELVDVEYVKEGQDWFLRVFIDSEKGVDIEECGAVSERLSEALDKEDPIPHLYFLDVSSPGAERPLKKEKDFQQAVGKQVAIKTYEPIDGEKMFEGKMLSYDGTTITLLLTIKTRKKEIQIPMDKVANARLAVTF.

It belongs to the RimP family.

It localises to the cytoplasm. Functionally, required for maturation of 30S ribosomal subunits. This chain is Ribosome maturation factor RimP, found in Bacillus thuringiensis (strain Al Hakam).